Reading from the N-terminus, the 958-residue chain is Eukaryotic translation initiation factor 3 subunit A (958 aa).

Positions M93–K123 form a coiled coil. One can recognise a PCI domain in the interval L316 to L513. 2 coiled-coil regions span residues E548 to E696 and L796 to S861. Residues K804–R859 are compositionally biased toward basic and acidic residues. The interval K804–R958 is disordered. Residues P877 to P894 show a composition bias toward low complexity. The span at K929–P942 shows a compositional bias: basic and acidic residues. Positions G946–R958 are enriched in polar residues.

The protein belongs to the eIF-3 subunit A family. In terms of assembly, component of the eukaryotic translation initiation factor 3 (eIF-3) complex.

It is found in the cytoplasm. Its function is as follows. RNA-binding component of the eukaryotic translation initiation factor 3 (eIF-3) complex, which is involved in protein synthesis of a specialized repertoire of mRNAs and, together with other initiation factors, stimulates binding of mRNA and methionyl-tRNAi to the 40S ribosome. The eIF-3 complex specifically targets and initiates translation of a subset of mRNAs involved in cell proliferation. This Nicotiana tabacum (Common tobacco) protein is Eukaryotic translation initiation factor 3 subunit A (TIF3A1).